Here is a 404-residue protein sequence, read N- to C-terminus: Cysteine desulfurase IscS (404 aa).

Pyridoxal 5'-phosphate contacts are provided by residues 75–76, asparagine 155, glutamine 183, and 203–205; these read AT and SAH. Lysine 206 carries the post-translational modification N6-(pyridoxal phosphate)lysine. A pyridoxal 5'-phosphate-binding site is contributed by threonine 243. The Cysteine persulfide intermediate role is filled by cysteine 328. Residue cysteine 328 coordinates [2Fe-2S] cluster.

The protein belongs to the class-V pyridoxal-phosphate-dependent aminotransferase family. NifS/IscS subfamily. As to quaternary structure, homodimer. Forms a heterotetramer with IscU, interacts with other sulfur acceptors. Pyridoxal 5'-phosphate serves as cofactor.

The protein resides in the cytoplasm. The enzyme catalyses (sulfur carrier)-H + L-cysteine = (sulfur carrier)-SH + L-alanine. Its pathway is cofactor biosynthesis; iron-sulfur cluster biosynthesis. In terms of biological role, master enzyme that delivers sulfur to a number of partners involved in Fe-S cluster assembly, tRNA modification or cofactor biosynthesis. Catalyzes the removal of elemental sulfur atoms from cysteine to produce alanine. Functions as a sulfur delivery protein for Fe-S cluster synthesis onto IscU, an Fe-S scaffold assembly protein, as well as other S acceptor proteins. This is Cysteine desulfurase IscS from Vibrio campbellii (strain ATCC BAA-1116).